The chain runs to 907 residues: Valine--tRNA ligase (907 aa).

The 'HIGH' region signature appears at 45–55; sequence PNVTGSLHMGH. The short motif at 554–558 is the 'KMSKS' region element; it reads KMSKS. Residue K557 participates in ATP binding. Positions 838 to 870 form a coiled coil; it reads GQLIDLEAERARLVKNVSKIEQDIEKISVKLNN.

This sequence belongs to the class-I aminoacyl-tRNA synthetase family. ValS type 1 subfamily. Monomer.

The protein localises to the cytoplasm. It carries out the reaction tRNA(Val) + L-valine + ATP = L-valyl-tRNA(Val) + AMP + diphosphate. Functionally, catalyzes the attachment of valine to tRNA(Val). As ValRS can inadvertently accommodate and process structurally similar amino acids such as threonine, to avoid such errors, it has a 'posttransfer' editing activity that hydrolyzes mischarged Thr-tRNA(Val) in a tRNA-dependent manner. In Bartonella quintana (strain Toulouse) (Rochalimaea quintana), this protein is Valine--tRNA ligase.